The chain runs to 690 residues: Elongation factor G (690 aa).

A tr-type G domain is found at 8-283 (ERYRNFGIMA…AVVDFMPSPL (276 aa)). GTP-binding positions include 17 to 24 (AHIDAGKT), 81 to 85 (DTPGH), and 135 to 138 (NKLD).

It belongs to the TRAFAC class translation factor GTPase superfamily. Classic translation factor GTPase family. EF-G/EF-2 subfamily.

Its subcellular location is the cytoplasm. Catalyzes the GTP-dependent ribosomal translocation step during translation elongation. During this step, the ribosome changes from the pre-translocational (PRE) to the post-translocational (POST) state as the newly formed A-site-bound peptidyl-tRNA and P-site-bound deacylated tRNA move to the P and E sites, respectively. Catalyzes the coordinated movement of the two tRNA molecules, the mRNA and conformational changes in the ribosome. This is Elongation factor G from Novosphingobium aromaticivorans (strain ATCC 700278 / DSM 12444 / CCUG 56034 / CIP 105152 / NBRC 16084 / F199).